Here is a 210-residue protein sequence, read N- to C-terminus: Proline-rich protein 20G (210 aa).

A compositionally biased stretch (basic residues) spans 1-11; that stretch reads MEEPRHSKRPR. The tract at residues 1-82 is disordered; it reads MEEPRHSKRP…GGSWRAGRGR (82 aa). A compositionally biased stretch (gly residues) spans 69–82; the sequence is GQRGGGSWRAGRGR.

Belongs to the PRR20 family.

The protein is Proline-rich protein 20G of Homo sapiens (Human).